A 519-amino-acid polypeptide reads, in one-letter code: Probable pectinesterase/pectinesterase inhibitor 36 (519 aa).

The first 25 residues, methionine 1–alanine 25, serve as a signal peptide directing secretion. The pectinesterase inhibitor 36 stretch occupies residues asparagine 27–phenylalanine 141. N-linked (GlcNAc...) asparagine glycans are attached at residues asparagine 92 and asparagine 130. The interval glycine 147–serine 196 is disordered. The segment covering threonine 164 to proline 184 has biased composition (basic residues). Residues arginine 186–serine 196 show a composition bias toward polar residues. Positions aspartate 205–aspartate 505 are pectinesterase 36. Substrate-binding residues include threonine 283 and glutamine 313. Aspartate 336 (proton donor; for pectinesterase activity) is an active-site residue. The Nucleophile; for pectinesterase activity role is filled by aspartate 357. The substrate site is built by arginine 425 and tryptophan 427.

The protein in the N-terminal section; belongs to the PMEI family. This sequence in the C-terminal section; belongs to the pectinesterase family. As to expression, expressed in siliques.

The protein resides in the secreted. The protein localises to the cell wall. The enzyme catalyses [(1-&gt;4)-alpha-D-galacturonosyl methyl ester](n) + n H2O = [(1-&gt;4)-alpha-D-galacturonosyl](n) + n methanol + n H(+). It functions in the pathway glycan metabolism; pectin degradation; 2-dehydro-3-deoxy-D-gluconate from pectin: step 1/5. Acts in the modification of cell walls via demethylesterification of cell wall pectin. This chain is Probable pectinesterase/pectinesterase inhibitor 36 (PME36), found in Arabidopsis thaliana (Mouse-ear cress).